The following is a 502-amino-acid chain: Probable cytosol aminopeptidase (502 aa).

Mn(2+) is bound by residues K269 and D274. K281 is a catalytic residue. D292, D351, and E353 together coordinate Mn(2+). R355 is an active-site residue.

This sequence belongs to the peptidase M17 family. It depends on Mn(2+) as a cofactor.

It localises to the cytoplasm. It catalyses the reaction Release of an N-terminal amino acid, Xaa-|-Yaa-, in which Xaa is preferably Leu, but may be other amino acids including Pro although not Arg or Lys, and Yaa may be Pro. Amino acid amides and methyl esters are also readily hydrolyzed, but rates on arylamides are exceedingly low.. The catalysed reaction is Release of an N-terminal amino acid, preferentially leucine, but not glutamic or aspartic acids.. In terms of biological role, presumably involved in the processing and regular turnover of intracellular proteins. Catalyzes the removal of unsubstituted N-terminal amino acids from various peptides. The sequence is that of Probable cytosol aminopeptidase from Vibrio parahaemolyticus serotype O3:K6 (strain RIMD 2210633).